The chain runs to 643 residues: Mediator of RNA polymerase II transcription subunit 17 (643 aa).

Residues 53–82 (SDSEEDGAERARAGREQWKQEPEEDEGQLK) form a disordered region. The span at 60–73 (AERARAGREQWKQE) shows a compositional bias: basic and acidic residues.

This sequence belongs to the Mediator complex subunit 17 family. In terms of assembly, component of the Mediator complex.

The protein resides in the nucleus. Functionally, component of the Mediator complex, a coactivator involved in the regulated transcription of nearly all RNA polymerase II-dependent genes. Mediator functions as a bridge to convey information from gene-specific regulatory proteins to the basal RNA polymerase II transcription machinery. Mediator is recruited to promoters by direct interactions with regulatory proteins and serves as a scaffold for the assembly of a functional preinitiation complex with RNA polymerase II and the general transcription factors. This is Mediator of RNA polymerase II transcription subunit 17 (med17) from Danio rerio (Zebrafish).